A 119-amino-acid chain; its full sequence is Large ribosomal subunit protein uL18 (119 aa).

Belongs to the universal ribosomal protein uL18 family. As to quaternary structure, part of the 50S ribosomal subunit; part of the 5S rRNA/L5/L18/L25 subcomplex. Contacts the 5S and 23S rRNAs.

Its function is as follows. This is one of the proteins that bind and probably mediate the attachment of the 5S RNA into the large ribosomal subunit, where it forms part of the central protuberance. The protein is Large ribosomal subunit protein uL18 of Xanthomonas oryzae pv. oryzae (strain PXO99A).